Reading from the N-terminus, the 525-residue chain is Exoglucanase 1 (525 aa).

Residues 1-18 (MRTAKFATLAALVASAAA) form the signal peptide. The catalytic stretch occupies residues 19–467 (QQACSLTTER…AGNGGNNGGN (449 aa)). The active-site Nucleophile is glutamate 231. Glutamate 236 acts as the Proton donor in catalysis. N-linked (GlcNAc...) asparagine glycosylation is present at asparagine 289. The segment at 454–492 (GLPGAGNGGNNGGNPPPPTTTTSSAPATTTTASAGPKAG) is disordered. Positions 456–465 (PGAGNGGNNG) are enriched in gly residues. The tract at residues 468–489 (PPPPTTTTSSAPATTTTASAGP) is linker. Over residues 473–489 (TTTSSAPATTTTASAGP) the composition is skewed to low complexity. The region spanning 489 to 525 (PKAGRWQQCGGIGFTGPTQCEEPYICTKLNDWYSQCL) is the CBM1 domain. 2 disulfide bridges follow: cysteine 497/cysteine 514 and cysteine 508/cysteine 524.

It belongs to the glycosyl hydrolase 7 (cellulase C) family.

The catalysed reaction is Hydrolysis of (1-&gt;4)-beta-D-glucosidic linkages in cellulose and cellotetraose, releasing cellobiose from the non-reducing ends of the chains.. In terms of biological role, the biological conversion of cellulose to glucose generally requires three types of hydrolytic enzymes: (1) Endoglucanases which cut internal beta-1,4-glucosidic bonds; (2) Exocellobiohydrolases that cut the disaccharide cellobiose from the non-reducing end of the cellulose polymer chain; (3) Beta-1,4-glucosidases which hydrolyze the cellobiose and other short cello-oligosaccharides to glucose. The sequence is that of Exoglucanase 1 (CBH-1) from Humicola insolens (Soft-rot fungus).